Reading from the N-terminus, the 974-residue chain is Bifunctional glutamine synthetase adenylyltransferase/adenylyl-removing enzyme (974 aa).

Positions 1-464 are adenylyl removase; that stretch reads MKNAFLKTQL…HYAALFENEQ (464 aa). Positions 468–974 are adenylyl transferase; it reads LEIGNLVFTG…YSIFKQVMKY (507 aa).

The protein belongs to the GlnE family. Requires Mg(2+) as cofactor.

The enzyme catalyses [glutamine synthetase]-O(4)-(5'-adenylyl)-L-tyrosine + phosphate = [glutamine synthetase]-L-tyrosine + ADP. It catalyses the reaction [glutamine synthetase]-L-tyrosine + ATP = [glutamine synthetase]-O(4)-(5'-adenylyl)-L-tyrosine + diphosphate. Functionally, involved in the regulation of glutamine synthetase GlnA, a key enzyme in the process to assimilate ammonia. When cellular nitrogen levels are high, the C-terminal adenylyl transferase (AT) inactivates GlnA by covalent transfer of an adenylyl group from ATP to specific tyrosine residue of GlnA, thus reducing its activity. Conversely, when nitrogen levels are low, the N-terminal adenylyl removase (AR) activates GlnA by removing the adenylyl group by phosphorolysis, increasing its activity. The regulatory region of GlnE binds the signal transduction protein PII (GlnB) which indicates the nitrogen status of the cell. This Bartonella henselae (strain ATCC 49882 / DSM 28221 / CCUG 30454 / Houston 1) (Rochalimaea henselae) protein is Bifunctional glutamine synthetase adenylyltransferase/adenylyl-removing enzyme.